The sequence spans 350 residues: MRKLLKPKREVGIVGYGAYVPMYRIKAEEIGRVWGVSSFPIEEKAVPGLDEDALTIGLEAARNALKRAGIDPKLIRAVWFGSESKPYAVKPTGTVIAEAIGATPDVSTADFEFACKAGTEALQTAIGFVGSEMADYAMAIGADTAQGRPGDHLEFTAGAGGAAFIVGPKSSETVAYFEGSYSYVTDTPDFWRRQHEHYPRHGNRFTGEPAYFHHIINAAKTLMEELGLTVNDFDYAVFHQPNVKFPLTVAKILGIPKEKVLPGLLSGTIGNTYSGATMVGVSAVLDIAKPGDRILWVSFGSGAGSDAFSVVVQDAIEEKRNLAPKVKDYVERKKYIDYALYAKARRKYIL.

Residue E83 is the Proton donor/acceptor of the active site. The Acyl-thioester intermediate role is filled by C115. (3S)-3-hydroxy-3-methylglutaryl-CoA contacts are provided by C115 and T156. CoA is bound at residue R204. Residues T206 and H239 each coordinate (3S)-3-hydroxy-3-methylglutaryl-CoA. H239 serves as the catalytic Proton donor/acceptor. Residue K244 coordinates CoA. Residues N271 and S301 each contribute to the (3S)-3-hydroxy-3-methylglutaryl-CoA site.

Belongs to the thiolase-like superfamily. Archaeal HMG-CoA synthase family. As to quaternary structure, interacts with acetoacetyl-CoA thiolase that catalyzes the precedent step in the pathway and with a DUF35 protein. The acetoacetyl-CoA thiolase/HMG-CoA synthase complex channels the intermediate via a fused CoA-binding site, which allows for efficient coupling of the endergonic thiolase reaction with the exergonic HMGCS reaction.

It carries out the reaction acetoacetyl-CoA + acetyl-CoA + H2O = (3S)-3-hydroxy-3-methylglutaryl-CoA + CoA + H(+). The protein operates within metabolic intermediate biosynthesis; (R)-mevalonate biosynthesis; (R)-mevalonate from acetyl-CoA: step 2/3. Functionally, catalyzes the condensation of acetyl-CoA with acetoacetyl-CoA to form 3-hydroxy-3-methylglutaryl-CoA (HMG-CoA). Functions in the mevalonate (MVA) pathway leading to isopentenyl diphosphate (IPP), a key precursor for the biosynthesis of isoprenoid compounds that are building blocks of archaeal membrane lipids. This is Hydroxymethylglutaryl-CoA synthase from Thermococcus gammatolerans (strain DSM 15229 / JCM 11827 / EJ3).